The sequence spans 317 residues: Beta-ketoacyl-[acyl-carrier-protein] synthase III (317 aa).

Catalysis depends on residues C112 and H244. Residues 245–249 (QANIR) form an ACP-binding region. N274 is a catalytic residue.

Belongs to the thiolase-like superfamily. FabH family. In terms of assembly, homodimer.

The protein resides in the cytoplasm. It carries out the reaction malonyl-[ACP] + acetyl-CoA + H(+) = 3-oxobutanoyl-[ACP] + CO2 + CoA. Its pathway is lipid metabolism; fatty acid biosynthesis. Catalyzes the condensation reaction of fatty acid synthesis by the addition to an acyl acceptor of two carbons from malonyl-ACP. Catalyzes the first condensation reaction which initiates fatty acid synthesis and may therefore play a role in governing the total rate of fatty acid production. Possesses both acetoacetyl-ACP synthase and acetyl transacylase activities. Its substrate specificity determines the biosynthesis of branched-chain and/or straight-chain of fatty acids. The polypeptide is Beta-ketoacyl-[acyl-carrier-protein] synthase III (Rickettsia prowazekii (strain Madrid E)).